Here is a 55-residue protein sequence, read N- to C-terminus: Conotoxin Cal22c (55 aa).

A propeptide spanning residues 1-5 (GRPSA) is cleaved from the precursor.

In terms of processing, contains 4 disulfide bonds. In terms of tissue distribution, expressed by the venom duct.

The protein resides in the secreted. Its function is as follows. Probable neurotoxin with unknown target. Possibly targets ion channels. In Californiconus californicus (California cone), this protein is Conotoxin Cal22c.